The sequence spans 595 residues: Probable inactive glycosyltransferase 25 family member 3 (595 aa).

A signal peptide spans 1–24; the sequence is MRAAPAAPLLQLLLLLGPRPEAAG. Residues Asn-75, Asn-153, Asn-237, and Asn-360 are each glycosylated (N-linked (GlcNAc...) asparagine). The segment at 576 to 595 is disordered; it reads RLDLAGGSGHSLRPHPRDEL. Positions 592–595 match the Prevents secretion from ER motif; it reads RDEL.

It belongs to the glycosyltransferase 25 family.

Its subcellular location is the endoplasmic reticulum lumen. Functionally, probable cell adhesion protein involved in leukocyte transmigration across the blood-brain barrier. Does not express any beta-galactosyltransferase activity in vitro. This Bos taurus (Bovine) protein is Probable inactive glycosyltransferase 25 family member 3 (CERCAM).